The sequence spans 343 residues: Phenylalanine--tRNA ligase alpha subunit (343 aa).

Glu258 contributes to the Mg(2+) binding site.

It belongs to the class-II aminoacyl-tRNA synthetase family. Phe-tRNA synthetase alpha subunit type 1 subfamily. As to quaternary structure, tetramer of two alpha and two beta subunits. The cofactor is Mg(2+).

The protein resides in the cytoplasm. The enzyme catalyses tRNA(Phe) + L-phenylalanine + ATP = L-phenylalanyl-tRNA(Phe) + AMP + diphosphate + H(+). In Symbiobacterium thermophilum (strain DSM 24528 / JCM 14929 / IAM 14863 / T), this protein is Phenylalanine--tRNA ligase alpha subunit.